The sequence spans 251 residues: MAVHLLIVDALNLIRRIHAVQGSPCVETCQHALDQLIMHSQPTHAVAVFDDENRSSGWRHQRLPDYKAGRPPMPEELHDEMPALRAAFEQRGVPCWSTSGNEADDLAATLAVKVTQAGHQATIVSTDKGYCQLLSPTLRIRDYFQKRWLDAPFIDKEFGVQPQQLPDYWGLAGISSSKVPGVAGIGPKSATQLLVEFQSLEGIYENLDAVAEKWRKKLETHKEMAFLCRDIARLQTDLHIDGNLQQLRLVR.

Aspartate 104 serves as a coordination point for Mg(2+). One can recognise a 5'-3' exonuclease domain in the interval 160–249 (VQPQQLPDYW…IDGNLQQLRL (90 aa)). 5 residues coordinate K(+): leucine 171, alanine 172, proline 180, valine 182, and isoleucine 185. An interaction with DNA region spans residues 184-189 (GIGPKS).

This sequence belongs to the Xni family. Requires Mg(2+) as cofactor. It depends on K(+) as a cofactor.

Its function is as follows. Has flap endonuclease activity. During DNA replication, flap endonucleases cleave the 5'-overhanging flap structure that is generated by displacement synthesis when DNA polymerase encounters the 5'-end of a downstream Okazaki fragment. This is Flap endonuclease Xni from Escherichia coli O139:H28 (strain E24377A / ETEC).